Here is a 477-residue protein sequence, read N- to C-terminus: UDP-N-acetylmuramate--L-alanine ligase (477 aa).

122–128 (GTHGKTT) serves as a coordination point for ATP.

Belongs to the MurCDEF family.

The protein resides in the cytoplasm. The catalysed reaction is UDP-N-acetyl-alpha-D-muramate + L-alanine + ATP = UDP-N-acetyl-alpha-D-muramoyl-L-alanine + ADP + phosphate + H(+). It functions in the pathway cell wall biogenesis; peptidoglycan biosynthesis. In terms of biological role, cell wall formation. The polypeptide is UDP-N-acetylmuramate--L-alanine ligase (Xanthomonas axonopodis pv. citri (strain 306)).